The primary structure comprises 210 residues: uncharacterized protein (210 aa).

The N-terminal stretch at 1 to 17 (MKRTAVSLCLLTGLLSG) is a signal peptide. Residue Cys18 is the site of N-palmitoyl cysteine attachment. Cys18 carries the S-diacylglycerol cysteine lipid modification. Over residues 176 to 195 (EMKTSPQGSPVSENENANGE) the composition is skewed to polar residues. A disordered region spans residues 176 to 210 (EMKTSPQGSPVSENENANGETRQDMKIDRNDKNAR). A compositionally biased stretch (basic and acidic residues) spans 196–210 (TRQDMKIDRNDKNAR).

The protein resides in the cell membrane. This is an uncharacterized protein from Bacillus subtilis (strain 168).